The primary structure comprises 646 residues: Chaperone protein DnaK (646 aa).

A Phosphothreonine; by autocatalysis modification is found at T198. The disordered stretch occupies residues 603–646 (EQAQQAGGAEGFDPNAFQGGDAGQQKADDGVVDAEFTEVKDDKK). Positions 618–627 (AFQGGDAGQQ) are enriched in low complexity.

Belongs to the heat shock protein 70 family.

Functionally, acts as a chaperone. The chain is Chaperone protein DnaK from Acinetobacter baumannii (strain ACICU).